A 363-amino-acid chain; its full sequence is Pyrimidine monooxygenase RutA (363 aa).

FMN-binding positions include 49–50 (IK), Asn-115, Glu-124, 140–141 (RY), and Ser-190.

Belongs to the NtaA/SnaA/DszA monooxygenase family. RutA subfamily.

The catalysed reaction is uracil + FMNH2 + NADH + O2 = (Z)-3-ureidoacrylate + FMN + NAD(+) + H2O + H(+). The enzyme catalyses thymine + FMNH2 + NADH + O2 = (Z)-2-methylureidoacrylate + FMN + NAD(+) + H2O + H(+). Functionally, catalyzes the pyrimidine ring opening between N-3 and C-4 by an unusual flavin hydroperoxide-catalyzed mechanism, adding oxygen atoms in the process to yield ureidoacrylate peracid, that immediately reacts with FMN forming ureidoacrylate and FMN-N(5)-oxide. The FMN-N(5)-oxide reacts spontaneously with NADH to produce FMN. Requires the flavin reductase RutF to regenerate FMN in vivo. This is Pyrimidine monooxygenase RutA from Klebsiella pneumoniae subsp. pneumoniae (strain ATCC 700721 / MGH 78578).